The chain runs to 164 residues: Type II secretion system protein M (164 aa).

Topologically, residues 1-17 (MNELRQRWQAMSQRERQ) are cytoplasmic. A helical transmembrane segment spans residues 18-38 (LMVVCAAVLLLCVVYYAILQP). The Periplasmic segment spans residues 39 to 164 (WQEREDLWER…RLMLERTDEA (126 aa)).

It belongs to the GSP M family. As to quaternary structure, type II secretion system is composed of four main components: the outer membrane complex, the inner membrane complex, the cytoplasmic secretion ATPase and the periplasm-spanning pseudopilus. Forms homodimers. Interacts with OutL/GspL. Interacts with OutE/GspE and OutF/GspF.

It is found in the cell inner membrane. Its function is as follows. Inner membrane component of the type II secretion system required for the energy-dependent secretion of extracellular factors such as proteases and toxins from the periplasm. Plays a role in the complex assembly and recruits OutL resulting in a stable complex in the inner membrane. Provides thus a link between the energy-providing OutE protein in the cytoplasm and the rest of the T2SS machinery. This Pectobacterium carotovorum subsp. carotovorum (Erwinia carotovora subsp. carotovora) protein is Type II secretion system protein M (outM).